Consider the following 292-residue polypeptide: Ribosomal RNA small subunit methyltransferase A (292 aa).

S-adenosyl-L-methionine contacts are provided by N28, L30, G55, E76, D101, and N126.

It belongs to the class I-like SAM-binding methyltransferase superfamily. rRNA adenine N(6)-methyltransferase family. RsmA subfamily.

Its subcellular location is the cytoplasm. It catalyses the reaction adenosine(1518)/adenosine(1519) in 16S rRNA + 4 S-adenosyl-L-methionine = N(6)-dimethyladenosine(1518)/N(6)-dimethyladenosine(1519) in 16S rRNA + 4 S-adenosyl-L-homocysteine + 4 H(+). In terms of biological role, specifically dimethylates two adjacent adenosines (A1518 and A1519) in the loop of a conserved hairpin near the 3'-end of 16S rRNA in the 30S particle. May play a critical role in biogenesis of 30S subunits. This is Ribosomal RNA small subunit methyltransferase A from Bacillus thuringiensis (strain Al Hakam).